The primary structure comprises 450 residues: Glucose-6-phosphate isomerase (450 aa).

Residue E291 is the Proton donor of the active site. Residues H312 and K426 contribute to the active site.

It belongs to the GPI family.

It localises to the cytoplasm. The catalysed reaction is alpha-D-glucose 6-phosphate = beta-D-fructose 6-phosphate. The protein operates within carbohydrate biosynthesis; gluconeogenesis. It participates in carbohydrate degradation; glycolysis; D-glyceraldehyde 3-phosphate and glycerone phosphate from D-glucose: step 2/4. Its function is as follows. Catalyzes the reversible isomerization of glucose-6-phosphate to fructose-6-phosphate. This is Glucose-6-phosphate isomerase from Clostridium botulinum (strain Langeland / NCTC 10281 / Type F).